A 159-amino-acid chain; its full sequence is Ribosomal RNA large subunit methyltransferase H (159 aa).

Residues L76, G108, and 127–132 each bind S-adenosyl-L-methionine; that span reads LSRLTF.

This sequence belongs to the RNA methyltransferase RlmH family. Homodimer.

The protein localises to the cytoplasm. The enzyme catalyses pseudouridine(1915) in 23S rRNA + S-adenosyl-L-methionine = N(3)-methylpseudouridine(1915) in 23S rRNA + S-adenosyl-L-homocysteine + H(+). Specifically methylates the pseudouridine at position 1915 (m3Psi1915) in 23S rRNA. This is Ribosomal RNA large subunit methyltransferase H from Syntrophomonas wolfei subsp. wolfei (strain DSM 2245B / Goettingen).